The primary structure comprises 303 residues: UDP-N-acetylenolpyruvoylglucosamine reductase (303 aa).

The FAD-binding PCMH-type domain occupies 30–195; it reads KTGGPADLLA…LSARFEMAKG (166 aa). Residue Arg174 is part of the active site. Residue Ser224 is the Proton donor of the active site. The active site involves Glu294.

Belongs to the MurB family. FAD is required as a cofactor.

Its subcellular location is the cytoplasm. The catalysed reaction is UDP-N-acetyl-alpha-D-muramate + NADP(+) = UDP-N-acetyl-3-O-(1-carboxyvinyl)-alpha-D-glucosamine + NADPH + H(+). It functions in the pathway cell wall biogenesis; peptidoglycan biosynthesis. Cell wall formation. This chain is UDP-N-acetylenolpyruvoylglucosamine reductase, found in Latilactobacillus sakei subsp. sakei (strain 23K) (Lactobacillus sakei subsp. sakei).